A 226-amino-acid polypeptide reads, in one-letter code: PKHD-type hydroxylase PputW619_4316 (226 aa).

A Fe2OG dioxygenase domain is found at 78–178; sequence KVFPPLINCY…RYAAFFWTQS (101 aa). Residues histidine 96, aspartate 98, and histidine 159 each contribute to the Fe cation site. Residue arginine 169 participates in 2-oxoglutarate binding.

Requires Fe(2+) as cofactor. It depends on L-ascorbate as a cofactor.

The polypeptide is PKHD-type hydroxylase PputW619_4316 (Pseudomonas putida (strain W619)).